Reading from the N-terminus, the 162-residue chain is Interleukin-15 (162 aa).

The first 29 residues, 1 to 29 (MRILKPYLRSTSIQCYLCLLLNSHFLTEA), serve as a signal peptide directing secretion. Residues 30–48 (GIHVFILGCISAGLPKTEA) constitute a propeptide that is removed on maturation. 2 disulfide bridges follow: Cys83-Cys133 and Cys90-Cys136. Residues Asn113, Asn121, and Asn127 are each glycosylated (N-linked (GlcNAc...) asparagine).

Belongs to the IL-15/IL-21 family.

It localises to the secreted. Cytokine that plays a major role in the development of inflammatory and protective immune responses to microbial invaders and parasites by modulating immune cells of both the innate and adaptive immune systems. Stimulates the proliferation of natural killer cells, T-cells and B-cells and promotes the secretion of several cytokines. In monocytes, induces the production of IL8 and monocyte chemotactic protein 1/CCL2, two chemokines that attract neutrophils and monocytes respectively to sites of infection. Unlike most cytokines, which are secreted in soluble form, IL15 is expressed in association with its high affinity IL15RA on the surface of IL15-producing cells and delivers signals to target cells that express IL2RB and IL2RG receptor subunits. Binding to its receptor triggers the phosphorylation of JAK1 and JAK3 and the recruitment and subsequent phosphorylation of signal transducer and activator of transcription-3/STAT3 and STAT5. In mast cells, induces the rapid tyrosine phosphorylation of STAT6 and thereby controls mast cell survival and release of cytokines such as IL4. The polypeptide is Interleukin-15 (IL15) (Bubalus bubalis (Domestic water buffalo)).